The chain runs to 215 residues: LexA repressor (215 aa).

A DNA-binding region (H-T-H motif) is located at residues 28-48 (RAEIAAELGFSSPNAAEEHLR). Active-site for autocatalytic cleavage activity residues include Ser-133 and Lys-170.

The protein belongs to the peptidase S24 family. Homodimer.

It catalyses the reaction Hydrolysis of Ala-|-Gly bond in repressor LexA.. Functionally, represses a number of genes involved in the response to DNA damage (SOS response), including recA and lexA. In the presence of single-stranded DNA, RecA interacts with LexA causing an autocatalytic cleavage which disrupts the DNA-binding part of LexA, leading to derepression of the SOS regulon and eventually DNA repair. This is LexA repressor from Burkholderia cenocepacia (strain HI2424).